The chain runs to 267 residues: MGYMVKLIYTQCKNCGYEWVVDQTIYYMKKYHDMVLTKTYFKPARFYVGDCNTIFNIAYDGIAWCDTPNNIVTKPSNSLKVITTSIWLKEHMEKKGIYVEQVIPRGINDEMAKKHVNFDFNARRGYVIIARNLPYKRIDNTLKMFEGKRKELTLISDHSNADFDFFSLSEDVKYYLLSHALFYIAVSDAEGFSIPPVEAMSVGTPLIYIKKHTYKEYGCGIEMDSIEDLRKIEISKEEWEDLSYKCWYKSLRYHYITVGQELWDWFK.

It belongs to the glycosyltransferase group 1 family. Glycosyltransferase 4 subfamily.

The polypeptide is Putative glycosyltransferase 63 (SIFV0063) (Sulfolobus islandicus filamentous virus (isolate Iceland/Hveragerdi) (SIFV)).